The following is a 90-amino-acid chain: Probable Fe(2+)-trafficking protein (90 aa).

Belongs to the Fe(2+)-trafficking protein family.

Functionally, could be a mediator in iron transactions between iron acquisition and iron-requiring processes, such as synthesis and/or repair of Fe-S clusters in biosynthetic enzymes. The polypeptide is Probable Fe(2+)-trafficking protein (Vibrio vulnificus (strain CMCP6)).